The chain runs to 278 residues: Large ribosomal subunit protein uL2 (278 aa).

Disordered stretches follow at residues 1 to 53 (MAIR…TTRH) and 224 to 278 (VVMN…NKKR). Positions 23–33 (EITRSTPEKSL) are enriched in basic and acidic residues. A compositionally biased stretch (polar residues) spans 258 to 267 (RNPNRYSNNM). A compositionally biased stretch (basic residues) spans 269–278 (VRRRRPNKKR).

Belongs to the universal ribosomal protein uL2 family. Part of the 50S ribosomal subunit. Forms a bridge to the 30S subunit in the 70S ribosome.

Functionally, one of the primary rRNA binding proteins. Required for association of the 30S and 50S subunits to form the 70S ribosome, for tRNA binding and peptide bond formation. It has been suggested to have peptidyltransferase activity; this is somewhat controversial. Makes several contacts with the 16S rRNA in the 70S ribosome. The sequence is that of Large ribosomal subunit protein uL2 from Corynebacterium aurimucosum (strain ATCC 700975 / DSM 44827 / CIP 107346 / CN-1) (Corynebacterium nigricans).